Reading from the N-terminus, the 218-residue chain is Glutathione S-transferase Mu 2 (218 aa).

A GST N-terminal domain is found at 2 to 88 (PIILGYWNIR…YIARKHNLCG (87 aa)). 7–8 (YW) contacts glutathione. Phosphoserine occurs at positions 27 and 44. Residues 43–46 (RSQW), lysine 50, 59–60 (NL), and 72–73 (QS) each bind glutathione. The region spanning 90–208 (TEKEKIQEDI…KSSRFLPRPV (119 aa)) is the GST C-terminal domain. Substrate is bound at residue tyrosine 116.

The protein belongs to the GST superfamily. Mu family. In terms of assembly, homodimer.

The protein resides in the cytoplasm. The enzyme catalyses RX + glutathione = an S-substituted glutathione + a halide anion + H(+). It catalyses the reaction 11(S)-hydroxy-14(S),15(S)-epoxy-(5Z,8Z,12E)-eicosatrienoate + glutathione = (11S,15S)-dihydroxy-14(R)-S-glutathionyl-(5Z,8Z,12E)-eicosatrienoate. Functionally, conjugation of reduced glutathione to a wide number of exogenous and endogenous hydrophobic electrophiles. Participates in the formation of novel hepoxilin regioisomers. The chain is Glutathione S-transferase Mu 2 (GSTM2) from Pongo abelii (Sumatran orangutan).